The sequence spans 463 residues: tRNA modification GTPase MnmE (463 aa).

Positions 27, 92, and 131 each coordinate (6S)-5-formyl-5,6,7,8-tetrahydrofolate. The TrmE-type G domain maps to 234 to 386 (GIKLAIVGKP…LEDHLLKIYS (153 aa)). K(+) is bound at residue N244. GTP-binding positions include 244–249 (NVGKSS), 263–269 (TNVAGTT), and 288–291 (DTAG). S248 is a binding site for Mg(2+). K(+) is bound by residues T263, V265, and T268. T269 contacts Mg(2+). Residue K463 participates in (6S)-5-formyl-5,6,7,8-tetrahydrofolate binding.

It belongs to the TRAFAC class TrmE-Era-EngA-EngB-Septin-like GTPase superfamily. TrmE GTPase family. Homodimer. Heterotetramer of two MnmE and two MnmG subunits. The cofactor is K(+).

It localises to the cytoplasm. Its function is as follows. Exhibits a very high intrinsic GTPase hydrolysis rate. Involved in the addition of a carboxymethylaminomethyl (cmnm) group at the wobble position (U34) of certain tRNAs, forming tRNA-cmnm(5)s(2)U34. This chain is tRNA modification GTPase MnmE, found in Mycoplasmopsis synoviae (strain 53) (Mycoplasma synoviae).